Reading from the N-terminus, the 84-residue chain is uncharacterized protein (84 aa).

This sequence belongs to the chlamydial CPn_0710/CT_666/TC_0037 family.

This is an uncharacterized protein from Chlamydia pneumoniae (Chlamydophila pneumoniae).